We begin with the raw amino-acid sequence, 438 residues long: Sphingomyelinase phosphodiesterase D (438 aa).

The signal sequence occupies residues 1 to 17; the sequence is MKIILILVLVLVVSINA. Zn(2+) contacts are provided by aspartate 27 and histidine 29. N-linked (GlcNAc...) asparagine glycosylation occurs at asparagine 40. Zn(2+) is bound by residues aspartate 111 and asparagine 148. A glycan (N-linked (GlcNAc...) asparagine) is linked at asparagine 160. Histidine 247 is a Zn(2+) binding site. Asparagine 271 is a glycosylation site (N-linked (GlcNAc...) asparagine). Residues histidine 287 and histidine 289 each contribute to the Zn(2+) site. N-linked (GlcNAc...) asparagine glycosylation is found at asparagine 338 and asparagine 359.

Belongs to the acid sphingomyelinase family. Requires Zn(2+) as cofactor.

The protein localises to the secreted. The protein is Sphingomyelinase phosphodiesterase D (sgmD) of Dictyostelium discoideum (Social amoeba).